Here is a 354-residue protein sequence, read N- to C-terminus: Short-chain dehydrogenase/reductase SAT2 (354 aa).

Positions 31, 85, 201, and 233 each coordinate NADP(+).

It belongs to the short-chain dehydrogenases/reductases (SDR) family.

Its pathway is mycotoxin biosynthesis. Its function is as follows. Short-chain dehydrogenase/reductase; part of the satratoxin SC1 cluster involved in the biosynthesis of satratoxins, trichothecene mycotoxins that are associated with human food poisonings. Satratoxins are suggested to be made by products of multiple gene clusters (SC1, SC2 and SC3) that encode 21 proteins in all, including polyketide synthases, acetyltransferases, and other enzymes expected to modify the trichothecene skeleton. SC1 encodes 10 proteins, SAT1 to SAT10. The largest are SAT8, which encodes a putative polyketide synthase (PKS) with a conventional non-reducing architecture, and SAT10, a putative protein containing four ankyrin repeats and thus may be involved in protein scaffolding. The putative short-chain reductase SAT3 may assist the PKS in some capacity. SAT6 contains a secretory lipase domain and acts probably as a trichothecene esterase. SAT5 encodes a putative acetyltransferase, and so, with SAT6, may affect endogenous protection from toxicity. The probable transcription factor SAT9 may regulate the expression of the SC1 cluster. SC2 encodes proteins SAT11 to SAT16, the largest of which encodes the putative reducing PKS SAT13. SAT11 is a cytochrome P450 monooxygenase, while SAT14 and SAT16 are probable acetyltransferases. The SC2 cluster may be regulated by the transcription factor SAT15. SC3 is a small cluster that encodes 5 proteins, SAT17 to SAT21. SAT21 is a putative MFS-type transporter which may have a role in exporting secondary metabolites. The four other proteins putatively encoded in SC3 include the taurine hydroxylase-like protein SAT17, the O-methyltransferase SAT18, the acetyltransferase SAT19, and the Cys6-type zinc finger SAT20, the latter being probably involved in regulation of SC3 expression. This Stachybotrys chartarum (strain CBS 109288 / IBT 7711) (Toxic black mold) protein is Short-chain dehydrogenase/reductase SAT2.